Consider the following 504-residue polypeptide: ATP synthase subunit alpha (504 aa).

170 to 177 is an ATP binding site; the sequence is GDRQTGKT.

The protein belongs to the ATPase alpha/beta chains family. F-type ATPases have 2 components, CF(1) - the catalytic core - and CF(0) - the membrane proton channel. CF(1) has five subunits: alpha(3), beta(3), gamma(1), delta(1), epsilon(1). CF(0) has three main subunits: a(1), b(2) and c(9-12). The alpha and beta chains form an alternating ring which encloses part of the gamma chain. CF(1) is attached to CF(0) by a central stalk formed by the gamma and epsilon chains, while a peripheral stalk is formed by the delta and b chains.

It is found in the cell membrane. It catalyses the reaction ATP + H2O + 4 H(+)(in) = ADP + phosphate + 5 H(+)(out). Produces ATP from ADP in the presence of a proton gradient across the membrane. The alpha chain is a regulatory subunit. The chain is ATP synthase subunit alpha from Shouchella clausii (strain KSM-K16) (Alkalihalobacillus clausii).